The chain runs to 391 residues: Multidrug resistance protein MdtL (391 aa).

12 consecutive transmembrane segments (helical) span residues 4 to 24 (FLIC…MYLV), 42 to 62 (IAFS…GKVA), 69 to 89 (PVAI…SLAE), 93 to 113 (LFLA…VVAF), 131 to 151 (LLNG…HLIM), 158 to 178 (SLFW…LFIL), 203 to 222 (FFLS…LTFV), 245 to 265 (ALTA…LGIF), 269 to 289 (TLMI…AVSP), 293 to 313 (VSLF…GVAM), 331 to 351 (LGIA…VVGI), and 356 to 376 (MLIG…MFVA).

Belongs to the major facilitator superfamily. DHA1 family. MdtL (TC 2.A.1.2.22) subfamily.

The protein resides in the cell inner membrane. Its function is as follows. Confers resistance to chloramphenicol. This is Multidrug resistance protein MdtL from Escherichia coli O9:H4 (strain HS).